Reading from the N-terminus, the 41-residue chain is Plantazolicin (41 aa).

Residues methionine 1 to alanine 27 constitute a propeptide that is removed on maturation. Arginine 28 carries the post-translational modification N2,N2-dimethylarginine. The thiazole-4-carboxylic acid (Arg-Cys) cross-link spans arginine 28 to cysteine 29. 2 cross-links (5-methyloxazole-4-carboxylic acid (Cys-Thr)) span residues cysteine 29–threonine 30 and cysteine 31–threonine 32. A cross-link (thiazole-4-carboxylic acid (Thr-Cys)) is located at residues threonine 30–cysteine 31. A cross-link (5-methyloxazole-4-carboxylic acid (Thr-Thr)) is located at residues threonine 32 to threonine 33. The oxazole-4-carboxylic acid (Ile-Ser) cross-link spans isoleucine 35–serine 36. 3 consecutive cross-links (oxazole-4-carboxylic acid (Ser-Ser)) follow at residues serine 36 to serine 37, serine 37 to serine 38, and serine 38 to serine 39. The 5-methyloxazoline-4-carboxylic acid (Ser-Thr) cross-link spans serine 39–threonine 40.

Maturation of thiazole and oxazole containing antibiotics involves the enzymatic condensation of a Cys, Ser or Thr with the alpha-carbonyl of the preceding amino acid to form a thioether or ether bond, then dehydration to form a double bond with the alpha-amino nitrogen. Thiazoline or oxazoline ring are dehydrogenated to form thiazole or oxazole rings. Post-translationally, 2 forms exist: plantazolicin A and plantazolicin B. The structural difference between them is a dimethylation at Arg-28 in plantazolicin A.

It localises to the secreted. The protein localises to the cell wall. In terms of biological role, peptide antibiotic inhibiting growth of Gram-positive bacteria in the dimethylated form plantazolicin A. The desmethyl form plantazolicin B has no antibiotic activity. The mode of action appears to be disruption of cell walls and lysis of cells. Inhibits B.subtilis strain HB0042, B.megaterium strain 7A1 and B.anthracis (MIC=2-4 ug/ml). Weakly inhibits Gram-positive bacteria B.brevis strain ATCC 8246, B.subtilis strain 168, B.cereus strain ATCC 14579 and strain CU1065, B.licheniformis strain ATCC 9789, M.luteus, B.sphaericus, P.granivorans and S.pyogenes (MIC=128 ug/ml). Does not inhibit B.pumilus, P.polymyxa, Arthrobacter sp., S.aureus, vancomycin-resistant E.faecalis, L.monocytogenes, methicillin-resistant S.aureus or Gram-negative bacteria E.coli strain K12, K.terrigena, Pseudomonas sp. and E.carotovora. The chain is Plantazolicin from Bacillus velezensis (strain DSM 23117 / BGSC 10A6 / LMG 26770 / FZB42) (Bacillus amyloliquefaciens subsp. plantarum).